The chain runs to 2435 residues: ATP-binding cassette sub-family A member 2 (2435 aa).

The N-linked (GlcNAc...) asparagine glycan is linked to asparagine 14. Helical transmembrane passes span 22 to 42 and 54 to 74; these read PWVL…LLGL and AFYT…QSLC. 3 N-linked (GlcNAc...) asparagine glycosylation sites follow: asparagine 89, asparagine 168, and asparagine 173. At glutamine 271 the chain carries N5-methylglutamine. Asparagine 305, asparagine 368, asparagine 379, asparagine 420, asparagine 432, asparagine 476, asparagine 484, asparagine 494, asparagine 530, asparagine 544, asparagine 590, asparagine 600, and asparagine 628 each carry an N-linked (GlcNAc...) asparagine glycan. 6 consecutive transmembrane segments (helical) span residues 699 to 719, 750 to 770, 782 to 802, 813 to 833, 857 to 877, and 893 to 913; these read FLFV…VYSV, VAWF…LTAI, VVII…FCFL, ASAC…YVAI, AFGL…GIQW, and LLAV…TWYI. Residues 990–1221 enclose the ABC transporter 1 domain; it reads VCVDKLTKVY…YGDGYRLTLV (232 aa). 1024-1031 is a binding site for ATP; that stretch reads GHNGAGKT. 2 disordered regions span residues 1223–1243 and 1325–1357; these read RPAE…PGRA and DQSL…GHAG. A phosphoserine mark is found at serine 1238, serine 1327, and serine 1331. Basic and acidic residues predominate over residues 1333–1342; sequence ADVKESRKDV. Asparagine 1408 carries an N-linked (GlcNAc...) asparagine glycan. The chain crosses the membrane as a helical span at residues 1456–1476; that stretch reads ALFSQILLPAFFVCVAMTVAL. 3 N-linked (GlcNAc...) asparagine glycosylation sites follow: asparagine 1496, asparagine 1549, and asparagine 1557. Residues 1586–1610 form a disordered region; the sequence is SNFVPPPPSPAPSDSPASPDEDLQA. Residues 1589 to 1598 show a composition bias toward pro residues; that stretch reads VPPPPSPAPS. N-linked (GlcNAc...) asparagine glycosylation is found at asparagine 1612, asparagine 1677, and asparagine 1775. Transmembrane regions (helical) follow at residues 1792–1812, 1841–1861, 1872–1892, 1905–1925, and 1991–2011; these read VVIA…FVVF, VWDM…LFVF, FPAV…IMYP, VFLI…TFLL, and GLVA…MCQY. One can recognise an ABC transporter 2 domain in the interval 2050 to 2285; that stretch reads VKIENLTKVY…FGDGYMITVR (236 aa). N-linked (GlcNAc...) asparagine glycosylation is present at asparagine 2054. Residue 2087 to 2094 coordinates ATP; sequence GVNGAGKT. Threonine 2412 is modified (phosphothreonine).

The protein belongs to the ABC transporter superfamily. ABCA family. In terms of processing, methylated at Gln-271 by N6AMT1. As to expression, highly expressed in the brain,peripheral blood leukocytes and ovary, whereas lower levels of expression is observed in kidney and liver. Weakly expressed in brain and highly in peripheral blood leukocytes.

Its subcellular location is the endosome membrane. The protein localises to the lysosome membrane. Probable lipid transporter that modulates cholesterol sequestration in the late endosome/lysosome by regulating the intracellular sphingolipid metabolism, in turn participates in cholesterol homeostasis. May alter the transbilayer distribution of ceramide in the intraluminal membrane lipid bilayer, favoring its retention in the outer leaflet that results in increased acid ceramidase activity in the late endosome/lysosome, facilitating ceramide deacylation to sphingosine leading to the sequestration of free cholesterol in lysosomes. In addition regulates amyloid-beta production either by activating a signaling pathway that regulates amyloid precursor protein transcription through the modulation of sphingolipid metabolism or through its role in gamma-secretase processing of APP. May play a role in myelin formation. The chain is ATP-binding cassette sub-family A member 2 from Homo sapiens (Human).